Reading from the N-terminus, the 180-residue chain is ATP-dependent protease subunit HslV (180 aa).

Thr6 is a catalytic residue. Na(+) contacts are provided by Ala164, Cys167, and Thr170.

It belongs to the peptidase T1B family. HslV subfamily. In terms of assembly, a double ring-shaped homohexamer of HslV is capped on each side by a ring-shaped HslU homohexamer. The assembly of the HslU/HslV complex is dependent on binding of ATP.

It localises to the cytoplasm. It carries out the reaction ATP-dependent cleavage of peptide bonds with broad specificity.. With respect to regulation, allosterically activated by HslU binding. Its function is as follows. Protease subunit of a proteasome-like degradation complex believed to be a general protein degrading machinery. This is ATP-dependent protease subunit HslV from Borrelia recurrentis (strain A1).